A 300-amino-acid polypeptide reads, in one-letter code: Tyrosine phosphatase-like protein J1 (300 aa).

One can recognise a Tyrosine-protein phosphatase domain in the interval 27 to 294 (LKREHEHIMQ…IFCYFTVLQF (268 aa)).

The protein belongs to the protein-tyrosine phosphatase family.

This chain is Tyrosine phosphatase-like protein J1 (J1), found in Microplitis demolitor (Parasitoid wasp).